A 132-amino-acid polypeptide reads, in one-letter code: Acyl-CoA thioester hydrolase YciA (132 aa).

In terms of domain architecture, HotDog ACOT-type spans 8 to 123 (PQGDLVLRTL…LFKYVAVDPE (116 aa)).

This sequence belongs to the acyl coenzyme A hydrolase family.

Functionally, catalyzes the hydrolysis of the thioester bond in palmitoyl-CoA and malonyl-CoA. This chain is Acyl-CoA thioester hydrolase YciA (yciA), found in Escherichia coli O6:H1 (strain CFT073 / ATCC 700928 / UPEC).